We begin with the raw amino-acid sequence, 473 residues long: Photosystem II CP43 reaction center protein (473 aa).

Residues 1–14 (MKTLYSLRRFYPVE) constitute a propeptide that is removed on maturation. Threonine 15 is subject to N-acetylthreonine. A Phosphothreonine modification is found at threonine 15. A run of 5 helical transmembrane segments spans residues 69-93 (LFEVAHFVPEKPMYEQGLILLPHLA), 134-155 (LLGPETLEESFPFFGYVWKDRN), 178-200 (KALYFGGVYDTWAPGGGDVRKIT), 255-275 (KPFAWARRALVWSGEAYLSYS), and 291-312 (WFNNTAYPSEFYGPTGPEASQA). Residue glutamate 367 coordinates [CaMn4O5] cluster. Residues 447 to 471 (RARAAAAGFEKGIDRDFEPVLSMTP) traverse the membrane as a helical segment.

The protein belongs to the PsbB/PsbC family. PsbC subfamily. In terms of assembly, PSII is composed of 1 copy each of membrane proteins PsbA, PsbB, PsbC, PsbD, PsbE, PsbF, PsbH, PsbI, PsbJ, PsbK, PsbL, PsbM, PsbT, PsbX, PsbY, PsbZ, Psb30/Ycf12, at least 3 peripheral proteins of the oxygen-evolving complex and a large number of cofactors. It forms dimeric complexes. The cofactor is Binds multiple chlorophylls and provides some of the ligands for the Ca-4Mn-5O cluster of the oxygen-evolving complex. It may also provide a ligand for a Cl- that is required for oxygen evolution. PSII binds additional chlorophylls, carotenoids and specific lipids..

The protein localises to the plastid. The protein resides in the chloroplast thylakoid membrane. Its function is as follows. One of the components of the core complex of photosystem II (PSII). It binds chlorophyll and helps catalyze the primary light-induced photochemical processes of PSII. PSII is a light-driven water:plastoquinone oxidoreductase, using light energy to abstract electrons from H(2)O, generating O(2) and a proton gradient subsequently used for ATP formation. The protein is Photosystem II CP43 reaction center protein of Daucus carota (Wild carrot).